The following is a 322-amino-acid chain: MSKETKPKVVVIGGGTGLPVVLKGLKKKEIHLTAIVTVADDGGSSGKIREQMDVLPPGDIRNVMLALSNVDPRVVDLFQYRFAVDGDLSGHVIGNLILTALSQLNDSYVDAINVLATVLKIRGKVIPATDQPLILNAEMEDGSIVHGESLIPLQGKHINRVFIEPENVKPYPTAVEAVKEADLIVIGPGSLYTSILPNLLLEELAEEITASKAQKVYITNILTQIGETDFFSDADHIKVIHEHVGKSFIDKTLINTTTVPKELLFPEDVAQVEHNAEEMEKLGVEAIYQDFLSTEDGLVRHAADKVADALLAMLPNKNNEKE.

Belongs to the gluconeogenesis factor family.

Its subcellular location is the cytoplasm. Functionally, required for morphogenesis under gluconeogenic growth conditions. The protein is Gluconeogenesis factor of Listeria innocua serovar 6a (strain ATCC BAA-680 / CLIP 11262).